Here is a 176-residue protein sequence, read N- to C-terminus: Inorganic pyrophosphatase (176 aa).

Substrate-binding residues include K30, R44, and Y56. The Mg(2+) site is built by D66, D71, and D103. Y142 contacts substrate.

The protein belongs to the PPase family. In terms of assembly, homohexamer. Mg(2+) is required as a cofactor.

It is found in the cytoplasm. It carries out the reaction diphosphate + H2O = 2 phosphate + H(+). Its function is as follows. Catalyzes the hydrolysis of inorganic pyrophosphate (PPi) forming two phosphate ions. In Vibrio parahaemolyticus serotype O3:K6 (strain RIMD 2210633), this protein is Inorganic pyrophosphatase.